Consider the following 258-residue polypeptide: Ciliogenesis and planar polarity effector 2 (258 aa).

Positions 51 to 258 (IDTASYKIFV…LPSSPESAPG (208 aa)) are small GTPase-like. Residues S64, G65, G67, K68, T69, A70, I82, H84, T87, K176, D178, and S206 each contribute to the GTP site.

This sequence belongs to the small GTPase superfamily. Rab family. Interacts with FUZ. Associates with the CPLANE (ciliogenesis and planar polarity effectors) complex via its interaction with FUZ.

It localises to the cytoplasm. The protein localises to the cytoskeleton. The protein resides in the cilium basal body. It is found in the microtubule organizing center. Its subcellular location is the centrosome. It localises to the centriole. Its function is as follows. Required for efficient primary cilia initiation, regulating a late step in cilia initiation. Plays a role in the final maturation of the mother centriole and ciliary vesicle that allows extension of the ciliary axoneme. The protein is Ciliogenesis and planar polarity effector 2 (Cplane2) of Mus musculus (Mouse).